We begin with the raw amino-acid sequence, 263 residues long: 3-methyl-2-oxobutanoate hydroxymethyltransferase (263 aa).

Residues D46 and D85 each contribute to the Mg(2+) site. Residues 46 to 47 (DS), D85, and K115 contribute to the 3-methyl-2-oxobutanoate site. Position 117 (E117) interacts with Mg(2+). Catalysis depends on E180, which acts as the Proton acceptor.

It belongs to the PanB family. In terms of assembly, homodecamer; pentamer of dimers. Mg(2+) serves as cofactor.

The protein resides in the cytoplasm. It catalyses the reaction 3-methyl-2-oxobutanoate + (6R)-5,10-methylene-5,6,7,8-tetrahydrofolate + H2O = 2-dehydropantoate + (6S)-5,6,7,8-tetrahydrofolate. It participates in cofactor biosynthesis; (R)-pantothenate biosynthesis; (R)-pantoate from 3-methyl-2-oxobutanoate: step 1/2. In terms of biological role, catalyzes the reversible reaction in which hydroxymethyl group from 5,10-methylenetetrahydrofolate is transferred onto alpha-ketoisovalerate to form ketopantoate. The sequence is that of 3-methyl-2-oxobutanoate hydroxymethyltransferase from Corynebacterium diphtheriae (strain ATCC 700971 / NCTC 13129 / Biotype gravis).